The primary structure comprises 407 residues: Putative aspartate aminotransferase, cytoplasmic 2 (407 aa).

At lysine 249 the chain carries N6-(pyridoxal phosphate)lysine.

Belongs to the class-I pyridoxal-phosphate-dependent aminotransferase family. Homodimer. Requires pyridoxal 5'-phosphate as cofactor.

It is found in the cytoplasm. The catalysed reaction is L-aspartate + 2-oxoglutarate = oxaloacetate + L-glutamate. The protein is Putative aspartate aminotransferase, cytoplasmic 2 (GOT1L1) of Bos taurus (Bovine).